A 221-amino-acid polypeptide reads, in one-letter code: Translation initiation factor 6 (221 aa).

It belongs to the eIF-6 family.

Functionally, binds to the 50S ribosomal subunit and prevents its association with the 30S ribosomal subunit to form the 70S initiation complex. This chain is Translation initiation factor 6, found in Natronomonas pharaonis (strain ATCC 35678 / DSM 2160 / CIP 103997 / JCM 8858 / NBRC 14720 / NCIMB 2260 / Gabara) (Halobacterium pharaonis).